The chain runs to 422 residues: Phosphoribosylamine--glycine ligase (422 aa).

One can recognise an ATP-grasp domain in the interval 107-314 (KAFMQRHGIP…LFDVLDRAID (208 aa)). 133-194 (VDREGAPIVI…EEFLAGEEAS (62 aa)) provides a ligand contact to ATP. Residues glutamate 284 and asparagine 286 each contribute to the Mg(2+) site.

Belongs to the GARS family. Mg(2+) serves as cofactor. Mn(2+) is required as a cofactor.

It catalyses the reaction 5-phospho-beta-D-ribosylamine + glycine + ATP = N(1)-(5-phospho-beta-D-ribosyl)glycinamide + ADP + phosphate + H(+). It participates in purine metabolism; IMP biosynthesis via de novo pathway; N(1)-(5-phospho-D-ribosyl)glycinamide from 5-phospho-alpha-D-ribose 1-diphosphate: step 2/2. This chain is Phosphoribosylamine--glycine ligase, found in Ralstonia nicotianae (strain ATCC BAA-1114 / GMI1000) (Ralstonia solanacearum).